The chain runs to 23 residues: Hongotoxin-4 (23 aa).

It belongs to the short scorpion toxin superfamily. Potassium channel inhibitor family. Alpha-KTx 02 subfamily. Expressed by the venom gland.

The protein localises to the secreted. Its function is as follows. Potent selective inhibitor of Kv1/KCNA voltage-gated potassium channels. The polypeptide is Hongotoxin-4 (Centruroides limbatus (Bark scorpion)).